The sequence spans 252 residues: Imidazole glycerol phosphate synthase subunit HisF (252 aa).

Active-site residues include Asp11 and Asp130.

This sequence belongs to the HisA/HisF family. Heterodimer of HisH and HisF.

The protein localises to the cytoplasm. It carries out the reaction 5-[(5-phospho-1-deoxy-D-ribulos-1-ylimino)methylamino]-1-(5-phospho-beta-D-ribosyl)imidazole-4-carboxamide + L-glutamine = D-erythro-1-(imidazol-4-yl)glycerol 3-phosphate + 5-amino-1-(5-phospho-beta-D-ribosyl)imidazole-4-carboxamide + L-glutamate + H(+). It participates in amino-acid biosynthesis; L-histidine biosynthesis; L-histidine from 5-phospho-alpha-D-ribose 1-diphosphate: step 5/9. Its function is as follows. IGPS catalyzes the conversion of PRFAR and glutamine to IGP, AICAR and glutamate. The HisF subunit catalyzes the cyclization activity that produces IGP and AICAR from PRFAR using the ammonia provided by the HisH subunit. This Staphylococcus aureus (strain MRSA252) protein is Imidazole glycerol phosphate synthase subunit HisF.